We begin with the raw amino-acid sequence, 393 residues long: Formate-dependent phosphoribosylglycinamide formyltransferase (393 aa).

N(1)-(5-phospho-beta-D-ribosyl)glycinamide is bound by residues 22–23 (EL) and glutamate 82. ATP is bound by residues arginine 114, lysine 155, 160-165 (SSGKGQ), 195-198 (EGFV), and glutamate 203. Residues 119–308 (RLAAEELGLP…EFALHVRAFT (190 aa)) enclose the ATP-grasp domain. Glutamate 267 and glutamate 279 together coordinate Mg(2+). Residues aspartate 286, lysine 356, and 363-364 (RR) each bind N(1)-(5-phospho-beta-D-ribosyl)glycinamide.

The protein belongs to the PurK/PurT family. Homodimer.

It carries out the reaction N(1)-(5-phospho-beta-D-ribosyl)glycinamide + formate + ATP = N(2)-formyl-N(1)-(5-phospho-beta-D-ribosyl)glycinamide + ADP + phosphate + H(+). It functions in the pathway purine metabolism; IMP biosynthesis via de novo pathway; N(2)-formyl-N(1)-(5-phospho-D-ribosyl)glycinamide from N(1)-(5-phospho-D-ribosyl)glycinamide (formate route): step 1/1. Its function is as follows. Involved in the de novo purine biosynthesis. Catalyzes the transfer of formate to 5-phospho-ribosyl-glycinamide (GAR), producing 5-phospho-ribosyl-N-formylglycinamide (FGAR). Formate is provided by PurU via hydrolysis of 10-formyl-tetrahydrofolate. The sequence is that of Formate-dependent phosphoribosylglycinamide formyltransferase from Vibrio cholerae serotype O1 (strain M66-2).